An 837-amino-acid chain; its full sequence is Tuftelin-interacting protein 11 (837 aa).

Composition is skewed to basic and acidic residues over residues 1–13 (MSLS…GEGR) and 53–64 (VWAERDSDDERP). Disordered regions lie at residues 1–21 (MSLS…DDER), 53–72 (VWAE…KRAR), and 85–133 (LKKG…KGFA). Positions 1–50 (MSLSHLYRDGEGRIDDDDDERENFEITDWDLQNEFNPNRQRHWQTKEEAT) are required for interaction with DHX15. 3 positions are modified to phosphoserine: serine 2, serine 59, and serine 98. A compositionally biased stretch (acidic residues) spans 91-102 (EEAELEDSDDEE). Residues 103-116 (KPVKQDDFPKDFGP) show a composition bias toward basic and acidic residues. At serine 144 the chain carries Phosphoserine. Positions 149 to 195 (TKGIGQKLLQKMGYVPGRGLGKNAQGIINPIEAKQRKGKGAVGAYGS) constitute a G-patch domain. Residues 179–236 (IEAKQRKGKGAVGAYGSERTTQSMQDFPVVDSEEEAEEEFQKELSQWRKDPSGSKKKP) are disordered. Serine 210 is modified (phosphoserine). Over residues 217-231 (EFQKELSQWRKDPSG) the composition is skewed to basic and acidic residues. The Nuclear localization signal motif lies at 700–705 (VKDKFN). The interval 710-734 (IMNRAVSSNVGAYMQPGARENIAYL) is required for nuclear speckle localization.

The protein belongs to the TFP11/STIP family. As to quaternary structure, identified in the spliceosome C complex. Found in the Intron Large (IL) complex, a post-mRNA release spliceosomal complex containing the excised intron, U2, U5 and U6 snRNPs, and splicing factors. Interacts with TUFT1. Interacts with DHX15; indicative for a recruitment of DHX15 to the IL complex. Interacts with GCFC2.

The protein localises to the cytoplasm. The protein resides in the nucleus. Functionally, involved in pre-mRNA splicing, specifically in spliceosome disassembly during late-stage splicing events. Intron turnover seems to proceed through reactions in two lariat-intron associated complexes termed Intron Large (IL) and Intron Small (IS). In cooperation with DHX15 seems to mediate the transition of the U2, U5 and U6 snRNP-containing IL complex to the snRNP-free IS complex leading to efficient debranching and turnover of excised introns. May play a role in the differentiation of ameloblasts and odontoblasts or in the forming of the enamel extracellular matrix. The polypeptide is Tuftelin-interacting protein 11 (TFIP11) (Homo sapiens (Human)).